The sequence spans 262 residues: Indole-3-glycerol phosphate synthase (262 aa).

Belongs to the TrpC family.

It catalyses the reaction 1-(2-carboxyphenylamino)-1-deoxy-D-ribulose 5-phosphate + H(+) = (1S,2R)-1-C-(indol-3-yl)glycerol 3-phosphate + CO2 + H2O. It participates in amino-acid biosynthesis; L-tryptophan biosynthesis; L-tryptophan from chorismate: step 4/5. This chain is Indole-3-glycerol phosphate synthase, found in Staphylococcus epidermidis (strain ATCC 12228 / FDA PCI 1200).